Reading from the N-terminus, the 80-residue chain is MFPLVKSALNRLQVRSIQQTMARQSHQKRTPDFHDKYGNAVLASGATFCIVTWTYVATQVGIEWNLSPVGRVTPKEWRNQ.

A mitochondrion-targeting transit peptide spans 1 to 24 (MFPLVKSALNRLQVRSIQQTMARQ). Over 25–32 (SHQKRTPD) the chain is Mitochondrial matrix. A helical transmembrane segment spans residues 33 to 59 (FHDKYGNAVLASGATFCIVTWTYVATQ). Residues 60–80 (VGIEWNLSPVGRVTPKEWRNQ) are Mitochondrial intermembrane-facing.

The protein belongs to the cytochrome c oxidase VIIb family. In terms of assembly, component of the cytochrome c oxidase (complex IV, CIV), a multisubunit enzyme composed of 14 subunits. The complex is composed of a catalytic core of 3 subunits MT-CO1, MT-CO2 and MT-CO3, encoded in the mitochondrial DNA, and 11 supernumerary subunits COX4I1 (or COX4I2), COX5A, COX5B, COX6A1 (or COX6A2), COX6B1 (or COX6B2), COX6C, COX7A2 (or COX7A1), COX7B, COX7C, COX8A and NDUFA4, which are encoded in the nuclear genome. The complex exists as a monomer or a dimer and forms supercomplexes (SCs) in the inner mitochondrial membrane with NADH-ubiquinone oxidoreductase (complex I, CI) and ubiquinol-cytochrome c oxidoreductase (cytochrome b-c1 complex, complex III, CIII), resulting in different assemblies (supercomplex SCI(1)III(2)IV(1) and megacomplex MCI(2)III(2)IV(2)).

Its subcellular location is the mitochondrion inner membrane. Its pathway is energy metabolism; oxidative phosphorylation. In terms of biological role, component of the cytochrome c oxidase, the last enzyme in the mitochondrial electron transport chain which drives oxidative phosphorylation. The respiratory chain contains 3 multisubunit complexes succinate dehydrogenase (complex II, CII), ubiquinol-cytochrome c oxidoreductase (cytochrome b-c1 complex, complex III, CIII) and cytochrome c oxidase (complex IV, CIV), that cooperate to transfer electrons derived from NADH and succinate to molecular oxygen, creating an electrochemical gradient over the inner membrane that drives transmembrane transport and the ATP synthase. Cytochrome c oxidase is the component of the respiratory chain that catalyzes the reduction of oxygen to water. Electrons originating from reduced cytochrome c in the intermembrane space (IMS) are transferred via the dinuclear copper A center (CU(A)) of subunit 2 and heme A of subunit 1 to the active site in subunit 1, a binuclear center (BNC) formed by heme A3 and copper B (CU(B)). The BNC reduces molecular oxygen to 2 water molecules using 4 electrons from cytochrome c in the IMS and 4 protons from the mitochondrial matrix. Plays a role in proper central nervous system (CNS) development in vertebrates. The sequence is that of Cytochrome c oxidase subunit 7B, mitochondrial (COX7B) from Homo sapiens (Human).